The chain runs to 355 residues: RLKTTVVLVPLLLLGWTGTLQGLPVLPEPLYPTQENFDLTRFVGTWHDVALTSSCPHMQRNRADAAIGKLVLEKDTGNKLKVTRTRLRHGTCVEMSGEYELTSTPGRIFYHIDRWDADVDAYVVHTNYDEYAIIIMSKQKTSGENSTSLKLYSRTMSVRDTVLDDFKTLVRHQGMSDDTIIIKQNKGDCIPGEQVEEAPSQPEPKRLRRQVLPTLALSDEEGSGDMSALFNDSEACKAAPETGPCFGFIQGFFYNSTSMRCELFTYGGCLGNQNNFVTVRECLQRCRTEAVCRLPMAPEPCTGQPTIWAFDFVTGSCMPYKDGICQANANQFYSRAECQEYCGVIKDDGELLTAS.

3-hydroxy-L-kynurenine-binding residues include Cys-55 and Lys-138. Cys-92 and Cys-189 are oxidised to a cystine. Asn-145 carries N-linked (GlcNAc...) asparagine glycosylation. Residue Lys-150 participates in 3-hydroxy-L-kynurenine binding. N-linked (GlcNAc...) asparagine glycans are attached at residues Asn-231 and Asn-255. Intrachain disulfides connect Cys-236–Cys-286, Cys-245–Cys-269, Cys-261–Cys-282, Cys-292–Cys-342, Cys-301–Cys-325, and Cys-317–Cys-338. BPTI/Kunitz inhibitor domains lie at Cys-236–Cys-286 and Cys-292–Cys-342.

In the N-terminal section; belongs to the calycin superfamily. Lipocalin family. I-alpha-I plasma protease inhibitors are assembled from one or two heavy chains (H1, H2 or H3) and one light chain, bikunin. Inter-alpha-inhibitor (I-alpha-I) is composed of H1, H2 and bikunin, inter-alpha-like inhibitor (I-alpha-LI) of H2 and bikunin, and pre-alpha-inhibitor (P-alpha-I) of H3 and bikunin. In terms of processing, the precursor is proteolytically processed into two separately functioning proteins. 3-hydroxykynurenine, an oxidized tryptophan metabolite that is common in biological fluids, reacts with Cys-55, Lys-138, and Lys-150 to form heterogeneous polycyclic chromophores including hydroxanthommatin. The reaction by alpha-1-microglobulin is autocatalytic. The chromophore can react with accessible cysteines forming non-reducible thioether cross-links with other molecules of alpha-1-microglobulin or with other proteins. As to expression, expressed by the liver and secreted in plasma.

It localises to the secreted. The chain is Protein AMBP from Pleuronectes platessa (European plaice).